Consider the following 180-residue polypeptide: ATP synthase subunit b, plastid (180 aa).

A helical membrane pass occupies residues 27–49 (LVTTLINIAVVLSLLIVFGKGFL).

This sequence belongs to the ATPase B chain family. As to quaternary structure, F-type ATPases have 2 components, F(1) - the catalytic core - and F(0) - the membrane proton channel. F(1) has five subunits: alpha(3), beta(3), gamma(1), delta(1), epsilon(1). F(0) has four main subunits: a(1), b(1), b'(1) and c(10-14). The alpha and beta chains form an alternating ring which encloses part of the gamma chain. F(1) is attached to F(0) by a central stalk formed by the gamma and epsilon chains, while a peripheral stalk is formed by the delta, b and b' chains.

Its subcellular location is the plastid membrane. Functionally, f(1)F(0) ATP synthase produces ATP from ADP in the presence of a proton or sodium gradient. F-type ATPases consist of two structural domains, F(1) containing the extramembraneous catalytic core and F(0) containing the membrane proton channel, linked together by a central stalk and a peripheral stalk. During catalysis, ATP synthesis in the catalytic domain of F(1) is coupled via a rotary mechanism of the central stalk subunits to proton translocation. Component of the F(0) channel, it forms part of the peripheral stalk, linking F(1) to F(0). The protein is ATP synthase subunit b, plastid of Cuscuta gronovii (Common dodder).